Here is a 663-residue protein sequence, read N- to C-terminus: A-type ATP synthase subunit I (663 aa).

7 helical membrane-spanning segments follow: residues 376-396, 412-432, 468-488, 497-517, 534-554, 568-588, and 589-609; these read FFFGFMLTDFLYGLIVGIVAA, FAYILLWSAFFTMLLGALFGS, LAALAIGLAHLFLGYTLGFVI, GAVFEQLPWMIIIIGVALLAS, IALFAVGELVINGGLAALMII, ARLMALALATGGIAMVINVLV, and GMVWAIKFLYIGPIIGLIIFF.

Belongs to the V-ATPase 116 kDa subunit family. As to quaternary structure, has multiple subunits with at least A(3), B(3), C, D, E, F, H, I and proteolipid K(x).

The protein localises to the cell membrane. In terms of biological role, component of the A-type ATP synthase that produces ATP from ADP in the presence of a proton gradient across the membrane. In Thermococcus kodakarensis (strain ATCC BAA-918 / JCM 12380 / KOD1) (Pyrococcus kodakaraensis (strain KOD1)), this protein is A-type ATP synthase subunit I.